Reading from the N-terminus, the 286-residue chain is Meteorin-like protein (286 aa).

The N-terminal stretch at 1–20 (MLRRGLLSFFMVILIDRGTS) is a signal peptide. 5 disulfide bridges follow: Cys28/Cys51, Cys84/Cys120, Cys165/Cys235, Cys168/Cys259, and Cys178/Cys281. Asn203 carries an N-linked (GlcNAc...) asparagine glycan.

It belongs to the meteorin family.

It is found in the secreted. Its function is as follows. Hormone induced following exercise or cold exposure that promotes energy expenditure. Induced either in the skeletal muscle after exercise or in adipose tissue following cold exposure and is present in the circulation. Able to stimulate energy expenditure associated with the browning of the white fat depots and improves glucose tolerance. In Xenopus laevis (African clawed frog), this protein is Meteorin-like protein (metrnl).